The primary structure comprises 381 residues: Erythronate-4-phosphate dehydrogenase (381 aa).

Residues S45 and T66 each contribute to the substrate site. Residues D146, T174, 205 to 207 (ASR), and D231 each bind NAD(+). R207 is a catalytic residue. The active site involves E236. Catalysis depends on H253, which acts as the Proton donor. Residue G256 participates in NAD(+) binding. Residue Y257 participates in substrate binding.

The protein belongs to the D-isomer specific 2-hydroxyacid dehydrogenase family. PdxB subfamily. In terms of assembly, homodimer.

The protein localises to the cytoplasm. The catalysed reaction is 4-phospho-D-erythronate + NAD(+) = (R)-3-hydroxy-2-oxo-4-phosphooxybutanoate + NADH + H(+). The protein operates within cofactor biosynthesis; pyridoxine 5'-phosphate biosynthesis; pyridoxine 5'-phosphate from D-erythrose 4-phosphate: step 2/5. Functionally, catalyzes the oxidation of erythronate-4-phosphate to 3-hydroxy-2-oxo-4-phosphonooxybutanoate. The sequence is that of Erythronate-4-phosphate dehydrogenase from Stutzerimonas stutzeri (strain A1501) (Pseudomonas stutzeri).